Reading from the N-terminus, the 435-residue chain is Probable exopolygalacturonase B (435 aa).

The signal sequence occupies residues Met-1 to Ser-15. N-linked (GlcNAc...) asparagine glycans are attached at residues Asn-59, Asn-184, and Asn-224. PbH1 repeat units lie at residues Ser-208 to Asn-239, Val-240 to Pro-261, Asn-262 to Ser-283, Ile-294 to Ala-315, and Ile-326 to Gln-347. The active-site Proton donor is the Asp-254. An intrachain disulfide couples Cys-256 to Cys-273. Asn-262 and Asn-274 each carry an N-linked (GlcNAc...) asparagine glycan. His-277 is a catalytic residue. Residues Asn-301, Asn-328, Asn-365, and Asn-373 are each glycosylated (N-linked (GlcNAc...) asparagine). Residues Val-366 to Asp-388 form a PbH1 6 repeat. Cysteines 391 and 397 form a disulfide. Asn-406 is a glycosylation site (N-linked (GlcNAc...) asparagine).

Belongs to the glycosyl hydrolase 28 family.

It is found in the secreted. It carries out the reaction [(1-&gt;4)-alpha-D-galacturonosyl](n) + H2O = alpha-D-galacturonate + [(1-&gt;4)-alpha-D-galacturonosyl](n-1). Its function is as follows. Specific in hydrolyzing the terminal glycosidic bond of polygalacturonic acid and oligogalacturonates. The sequence is that of Probable exopolygalacturonase B (pgxB) from Aspergillus oryzae (strain ATCC 42149 / RIB 40) (Yellow koji mold).